A 678-amino-acid polypeptide reads, in one-letter code: MAGSVVAAAAAAGGGTGSSCDALYRELWHACAGPLVTVPRQGELVYYFPQGHMEQLEASTDQQLDQHLPLFNLPSKILCKVVNVELRAETDSDEVYAQIMLQPEADQNELTSPKPEPHEPEKCNVHSFCKTLTASDTSTHGGFSVLRRHAEECLPPLDMTQNPPWQELVARDLHGNEWHFRHIFRGQPRRHLLTTGWSVFVSSKRLVAGDAFIFLRGENGELRVGVRRLMRQLNNMPSSVISSHSMHLGVLATASHAISTGTLFSVFYKPRTSQSEFVVSANKYLEAKNSKISVGMRFKMRFEGDEAPERRFSGTIIGVGSMSTSPWANSDWRSLKVQWDEPSVVPRPDRVSPWELEPLAVSNSQPSPQPPARNKRARPPASNSIAPELPPVFGLWKSSAESTQGFSFSGLQRTQELYPSSPNPIFSTSLNVGFSTKNEPSALSNKHFYWPMRETRANSYSASISKVPSEKKQEPSSAGCRLFGIEISSAVEATSPLAAVSGVGQDQPAASVDAESDQLSQPSHANKSDAPAASSEPSPHETQSRQVRSCTKVIMQGMAVGRAVDLTRLHGYDDLRCKLEEMFDIQGELSASLKKWKVVYTDDEDDMMLVGDDPWPEFCSMVKRIYIYTYEEAKQLTPKSKLPIIGDAIKPNPNKQSPESDMPHSDLDSTAPVTDKDC.

Positions 128–230 (FCKTLTASDT…ELRVGVRRLM (103 aa)) form a DNA-binding region, TF-B3. Disordered stretches follow at residues 360 to 386 (AVSN…NSIA) and 502 to 547 (GVGQ…SRQV). Positions 548-641 (RSCTKVIMQG…EAKQLTPKSK (94 aa)) constitute a PB1 domain. Residues 643 to 678 (PIIGDAIKPNPNKQSPESDMPHSDLDSTAPVTDKDC) form a disordered region.

Belongs to the ARF family. In terms of assembly, homodimers and heterodimers. As to expression, expressed in roots, culms, leaves and young panicles.

The protein localises to the nucleus. In terms of biological role, auxin response factors (ARFs) are transcriptional factors that bind specifically to the DNA sequence 5'-TGTCTC-3' found in the auxin-responsive promoter elements (AuxREs). The sequence is that of Auxin response factor 7 (ARF7) from Oryza sativa subsp. japonica (Rice).